A 29-amino-acid chain; its full sequence is Protein Tat (29 aa).

The tract at residues 1–29 is disordered; sequence PSSQPRGDPTGQEEPKKKVEKKTTTDPFD. Positions 6 to 8 match the Cell attachment site motif; it reads RGD. Positions 13–29 are enriched in basic and acidic residues; the sequence is EEPKKKVEKKTTTDPFD.

This sequence belongs to the lentiviruses Tat family. As to quaternary structure, interacts with host CCNT1. Associates with the P-TEFb complex composed at least of Tat, P-TEFb (CDK9 and CCNT1), TAR RNA, RNA Pol II. Recruits the HATs CREBBP, TAF1/TFIID, EP300, PCAF and GCN5L2. Interacts with host KAT5/Tip60; this interaction targets the latter to degradation. Interacts with the host deacetylase SIRT1. Interacts with host capping enzyme RNGTT; this interaction stimulates RNGTT. Binds to host KDR, and to the host integrins ITGAV/ITGB3 and ITGA5/ITGB1. Interacts with host KPNB1/importin beta-1 without previous binding to KPNA1/importin alpha-1. Interacts with EIF2AK2. Interacts with host nucleosome assembly protein NAP1L1; this interaction may be required for the transport of Tat within the nucleus, since the two proteins interact at the nuclear rim. Interacts with host C1QBP/SF2P32; this interaction involves lysine-acetylated Tat. Interacts with the host chemokine receptors CCR2, CCR3 and CXCR4. Interacts with host DPP4/CD26; this interaction may trigger an anti-proliferative effect. Interacts with host LDLR. Interacts with the host extracellular matrix metalloproteinase MMP1. Interacts with host PRMT6; this interaction mediates Tat's methylation. Interacts with, and is ubiquitinated by MDM2/Hdm2. Interacts with host PSMC3 and HTATIP2. Interacts with STAB1; this interaction may overcome SATB1-mediated repression of IL2 and IL2RA (interleukin) in T cells by binding to the same domain than HDAC1. Interacts (when acetylated) with human CDK13, thereby increasing HIV-1 mRNA splicing and promoting the production of the doubly spliced HIV-1 protein Nef. Acetylation by EP300, CREBBP, GCN5L2/GCN5 and PCAF regulates the transactivation activity of Tat. Post-translationally, phosphorylated by EIF2AK2 on serine and threonine residues adjacent to the basic region important for TAR RNA binding and function. Phosphorylation of Tat by EIF2AK2 is dependent on the prior activation of EIF2AK2 by dsRNA. In terms of processing, asymmetrical arginine methylation by host PRMT6 seems to diminish the transactivation capacity of Tat and affects the interaction with host CCNT1. Polyubiquitination by MDM2 does not target Tat to degradation, but activates its transactivation function and fosters interaction with CCNT1 and TAR RNA.

It is found in the host nucleus. It localises to the host nucleolus. The protein resides in the host cytoplasm. The protein localises to the secreted. Functionally, transcriptional activator that increases RNA Pol II processivity, thereby increasing the level of full-length viral transcripts. Recognizes a hairpin structure at the 5'-LTR of the nascent viral mRNAs referred to as the transactivation responsive RNA element (TAR) and recruits the cyclin T1-CDK9 complex (P-TEFb complex) that will in turn hyperphosphorylate the RNA polymerase II to allow efficient elongation. The CDK9 component of P-TEFb and other Tat-activated kinases hyperphosphorylate the C-terminus of RNA Pol II that becomes stabilized and much more processive. Other factors such as HTATSF1/Tat-SF1, SUPT5H/SPT5, and HTATIP2 are also important for Tat's function. Besides its effect on RNA Pol II processivity, Tat induces chromatin remodeling of proviral genes by recruiting the histone acetyltransferases (HATs) CREBBP, EP300 and PCAF to the chromatin. This also contributes to the increase in proviral transcription rate, especially when the provirus integrates in transcriptionally silent region of the host genome. To ensure maximal activation of the LTR, Tat mediates nuclear translocation of NF-kappa-B by interacting with host RELA. Through its interaction with host TBP, Tat may also modulate transcription initiation. Tat can reactivate a latently infected cell by penetrating in it and transactivating its LTR promoter. In the cytoplasm, Tat is thought to act as a translational activator of HIV-1 mRNAs. Extracellular circulating Tat can be endocytosed by surrounding uninfected cells via the binding to several surface receptors such as CD26, CXCR4, heparan sulfate proteoglycans (HSPG) or LDLR. Neurons are rarely infected, but they internalize Tat via their LDLR. Endosomal low pH allows Tat to cross the endosome membrane to enter the cytosol and eventually further translocate into the nucleus, thereby inducing severe cell dysfunctions ranging from cell activation to cell death. Through its interaction with nuclear HATs, Tat is potentially able to control the acetylation-dependent cellular gene expression. Tat seems to inhibit the HAT activity of KAT5/Tip60 and TAF1, and consequently modify the expression of specific cellular genes. Modulates the expression of many cellular genes involved in cell survival, proliferation or in coding for cytokines (such as IL10) or cytokine receptors. May be involved in the derepression of host interleukin IL2 expression. Mediates the activation of cyclin-dependent kinases and dysregulation of microtubule network. Tat plays a role in T-cell and neurons apoptosis. Tat induced neurotoxicity and apoptosis probably contribute to neuroAIDS. Host extracellular matrix metalloproteinase MMP1 cleaves Tat and decreases Tat's mediated neurotoxicity. Circulating Tat also acts as a chemokine-like and/or growth factor-like molecule that binds to specific receptors on the surface of the cells, affecting many cellular pathways. In the vascular system, Tat binds to ITGAV/ITGB3 and ITGA5/ITGB1 integrins dimers at the surface of endothelial cells and competes with bFGF for heparin-binding sites, leading to an excess of soluble bFGF. Binds to KDR/VEGFR-2. All these Tat-mediated effects enhance angiogenesis in Kaposi's sarcoma lesions. The sequence is that of Protein Tat from Homo sapiens (Human).